We begin with the raw amino-acid sequence, 639 residues long: MNKFIAAEAAECIGCHACEIACAVAHNQENWPLSHSDFRPRIHVVGKGQAANPVACHHCNNAPCVTACPVNALTFQSDSVQLDEQKCIGCKRCAIACPFGVVEMVDTIAQKCDLCNQRSSGTQACIEVCPTQALRLMDDKGLQQIKVARQRKTAAGKASSDAQPSRSAALLPVNSRKGADKISASERKTHFGEIYCGLDPQQATYESDRCVYCAEKANCNWHCPLHNAIPDYIRLVQEGKIIEAAELCHQTSSLPEICGRVCPQDRLCEGACTLKDHSGAVSIGNLERYITDTALAMGWRPDVSKVVPRSEKVAVIGAGPAGLGCADILARAGVQVDVFDRHPEIGGMLTFGIPPFKLDKTVLSQRREIFTAMGIDFHLNCEIGRDITFSDLTSEYDAVFIGVGTYGMMRADLPHEDAPGVIQALPFLTAHTRQLMGLPESEEYPLTDVEGKRVVVLGGGDTTMDCLRTSIRLNAASVTCAYRRDEVSMPGSRKEVVNAREEGVEFQFNVQPQYIACDEDGRLTAVGLIRTAMGEPGPDGRRRPRPVAGSEFELPADVLIMAFGFQAHAMPWLQGSGIKLDKWGLIQTGDVGYLPTQTHLKKVFAGGDAVHGADLVVTAMAAGRQAARDMLTLFDTKAS.

4Fe-4S ferredoxin-type domains lie at 3-32, 47-77, 78-107, 110-139, and 201-235; these read KFIA…ENWP, KGQA…TFQS, DSVQ…MVDT, QKCD…LMDD, and QQAT…YIRL. Residues Cys12, Cys15, Cys18, Cys22, Cys56, Cys59, Cys64, Cys68, Cys87, Cys90, Cys93, Cys97, Cys112, Cys115, Cys125, Cys129, Cys210, Cys213, Cys219, and Cys223 each contribute to the [4Fe-4S] cluster site.

Requires [4Fe-4S] cluster as cofactor.

Its function is as follows. Involved in formate-dependent uric acid degradation under microaerobic and anaerobic conditions. May reduce the enzymes necessary for uric acid degradation. This Escherichia coli (strain K12) protein is Putative oxidoreductase UacF.